Here is a 417-residue protein sequence, read N- to C-terminus: Serine hydroxymethyltransferase (417 aa).

Residues Leu121 and 125–127 (GHL) contribute to the (6S)-5,6,7,8-tetrahydrofolate site. Lys229 carries the N6-(pyridoxal phosphate)lysine modification. 355-357 (SPF) contributes to the (6S)-5,6,7,8-tetrahydrofolate binding site.

Belongs to the SHMT family. In terms of assembly, homodimer. Pyridoxal 5'-phosphate serves as cofactor.

It is found in the cytoplasm. The catalysed reaction is (6R)-5,10-methylene-5,6,7,8-tetrahydrofolate + glycine + H2O = (6S)-5,6,7,8-tetrahydrofolate + L-serine. The protein operates within one-carbon metabolism; tetrahydrofolate interconversion. Its pathway is amino-acid biosynthesis; glycine biosynthesis; glycine from L-serine: step 1/1. In terms of biological role, catalyzes the reversible interconversion of serine and glycine with tetrahydrofolate (THF) serving as the one-carbon carrier. This reaction serves as the major source of one-carbon groups required for the biosynthesis of purines, thymidylate, methionine, and other important biomolecules. Also exhibits THF-independent aldolase activity toward beta-hydroxyamino acids, producing glycine and aldehydes, via a retro-aldol mechanism. This Stenotrophomonas maltophilia (strain R551-3) protein is Serine hydroxymethyltransferase.